A 280-amino-acid chain; its full sequence is Large ribosomal subunit protein uL2 (280 aa).

The tract at residues 223–280 is disordered; sequence VVMNPVDHPHGGGEGRTSGGRHPVTPWGKPTKGARTRNKNKASSKLIIRSRHAKKKGR. The span at 254 to 280 shows a compositional bias: basic residues; that stretch reads KGARTRNKNKASSKLIIRSRHAKKKGR.

It belongs to the universal ribosomal protein uL2 family. In terms of assembly, part of the 50S ribosomal subunit. Forms a bridge to the 30S subunit in the 70S ribosome.

In terms of biological role, one of the primary rRNA binding proteins. Required for association of the 30S and 50S subunits to form the 70S ribosome, for tRNA binding and peptide bond formation. It has been suggested to have peptidyltransferase activity; this is somewhat controversial. Makes several contacts with the 16S rRNA in the 70S ribosome. In Dinoroseobacter shibae (strain DSM 16493 / NCIMB 14021 / DFL 12), this protein is Large ribosomal subunit protein uL2.